The primary structure comprises 333 residues: Fructose-1,6-bisphosphatase class 1 (333 aa).

Residues E90, D113, L115, and D116 each contribute to the Mg(2+) site. Substrate is bound by residues 116 to 119 (DGSS), N209, Y242, and K272. Mg(2+) is bound at residue E278.

It belongs to the FBPase class 1 family. As to quaternary structure, homotetramer. Requires Mg(2+) as cofactor.

The protein resides in the cytoplasm. It catalyses the reaction beta-D-fructose 1,6-bisphosphate + H2O = beta-D-fructose 6-phosphate + phosphate. Its pathway is carbohydrate biosynthesis; gluconeogenesis. This Pasteurella multocida (strain Pm70) protein is Fructose-1,6-bisphosphatase class 1.